An 82-amino-acid chain; its full sequence is Translational regulator CsrA (82 aa).

The protein belongs to the CsrA/RsmA family. As to quaternary structure, homodimer; the beta-strands of each monomer intercalate to form a hydrophobic core, while the alpha-helices form wings that extend away from the core.

The protein localises to the cytoplasm. Functionally, a translational regulator that binds mRNA to regulate translation initiation and/or mRNA stability. Usually binds in the 5'-UTR at or near the Shine-Dalgarno sequence preventing ribosome-binding, thus repressing translation. Its main target seems to be the major flagellin gene, while its function is anatagonized by FliW. The protein is Translational regulator CsrA of Brachyspira hyodysenteriae (strain ATCC 49526 / WA1).